The sequence spans 349 residues: Anthranilate phosphoribosyltransferase (349 aa).

5-phospho-alpha-D-ribose 1-diphosphate contacts are provided by residues glycine 82, 85 to 86 (GD), 92 to 95 (NVSS), 110 to 118 (KHGNRAVSG), and serine 122. Glycine 82 is a binding site for anthranilate. Serine 94 is a Mg(2+) binding site. Asparagine 113 is a binding site for anthranilate. Arginine 168 provides a ligand contact to anthranilate. Residues aspartate 227 and glutamate 228 each contribute to the Mg(2+) site.

It belongs to the anthranilate phosphoribosyltransferase family. As to quaternary structure, homodimer. Mg(2+) serves as cofactor.

It carries out the reaction N-(5-phospho-beta-D-ribosyl)anthranilate + diphosphate = 5-phospho-alpha-D-ribose 1-diphosphate + anthranilate. The protein operates within amino-acid biosynthesis; L-tryptophan biosynthesis; L-tryptophan from chorismate: step 2/5. Catalyzes the transfer of the phosphoribosyl group of 5-phosphorylribose-1-pyrophosphate (PRPP) to anthranilate to yield N-(5'-phosphoribosyl)-anthranilate (PRA). The polypeptide is Anthranilate phosphoribosyltransferase (Pseudomonas paraeruginosa (strain DSM 24068 / PA7) (Pseudomonas aeruginosa (strain PA7))).